The chain runs to 356 residues: tRNA N6-adenosine threonylcarbamoyltransferase (356 aa).

Positions 115 and 119 each coordinate Fe cation. Substrate-binding positions include L138–G142, D171, G184, and N283. D311 is a binding site for Fe cation.

The protein belongs to the KAE1 / TsaD family. Fe(2+) is required as a cofactor.

The protein localises to the cytoplasm. It carries out the reaction L-threonylcarbamoyladenylate + adenosine(37) in tRNA = N(6)-L-threonylcarbamoyladenosine(37) in tRNA + AMP + H(+). Functionally, required for the formation of a threonylcarbamoyl group on adenosine at position 37 (t(6)A37) in tRNAs that read codons beginning with adenine. Is involved in the transfer of the threonylcarbamoyl moiety of threonylcarbamoyl-AMP (TC-AMP) to the N6 group of A37, together with TsaE and TsaB. TsaD likely plays a direct catalytic role in this reaction. The polypeptide is tRNA N6-adenosine threonylcarbamoyltransferase (Prochlorococcus marinus (strain SARG / CCMP1375 / SS120)).